The chain runs to 367 residues: 7,8-didemethyl-8-hydroxy-5-deazariboflavin synthase (367 aa).

The region spanning Leu-39–Asn-275 is the Radical SAM core domain. [4Fe-4S] cluster-binding residues include Cys-53, Cys-57, and Cys-60.

Belongs to the radical SAM superfamily. CofG family. As to quaternary structure, consists of two subunits, CofG and CofH. [4Fe-4S] cluster serves as cofactor.

The enzyme catalyses 5-amino-5-(4-hydroxybenzyl)-6-(D-ribitylimino)-5,6-dihydrouracil + S-adenosyl-L-methionine = 7,8-didemethyl-8-hydroxy-5-deazariboflavin + 5'-deoxyadenosine + L-methionine + NH4(+) + H(+). The protein operates within cofactor biosynthesis; coenzyme F0 biosynthesis. Its function is as follows. Catalyzes the radical-mediated synthesis of 7,8-didemethyl-8-hydroxy-5-deazariboflavin from 5-amino-5-(4-hydroxybenzyl)-6-(D-ribitylimino)-5,6-dihydrouracil. In Halobacterium salinarum (strain ATCC 29341 / DSM 671 / R1), this protein is 7,8-didemethyl-8-hydroxy-5-deazariboflavin synthase.